Here is a 281-residue protein sequence, read N- to C-terminus: Energy-coupling factor transporter ATP-binding protein EcfA2 (281 aa).

In terms of domain architecture, ABC transporter spans 3–242 (IKVTGLTYVY…TETLEEIGLA (240 aa)). 40–47 (GHTGSGKS) lines the ATP pocket.

The protein belongs to the ABC transporter superfamily. Energy-coupling factor EcfA family. Forms a stable energy-coupling factor (ECF) transporter complex composed of 2 membrane-embedded substrate-binding proteins (S component), 2 ATP-binding proteins (A component) and 2 transmembrane proteins (T component).

The protein localises to the cell membrane. Its function is as follows. ATP-binding (A) component of a common energy-coupling factor (ECF) ABC-transporter complex. Unlike classic ABC transporters this ECF transporter provides the energy necessary to transport a number of different substrates. The chain is Energy-coupling factor transporter ATP-binding protein EcfA2 from Acetivibrio thermocellus (strain ATCC 27405 / DSM 1237 / JCM 9322 / NBRC 103400 / NCIMB 10682 / NRRL B-4536 / VPI 7372) (Clostridium thermocellum).